Consider the following 1048-residue polypeptide: Dyslexia-associated protein KIAA0319-like protein (1048 aa).

The Cytoplasmic segment spans residues 1–29; it reads MEKRLGVKPSPASWVLPGYCWQTSVKLPR. Residues 30–50 form a helical membrane-spanning segment; that stretch reads SLYLLYSFFCFSVLWLSTDAD. The MANSC domain maps to 49-127; it reads ADESRCQQGK…PFRTDSSNSM (79 aa). Residues 51-928 are Extracellular-facing; the sequence is ESRCQQGKTL…RDGDSNCEWS (878 aa). Disordered stretches follow at residues 198–218 and 231–300; these read HGAM…LSPT and SFTS…STSA. Positions 231–241 are enriched in polar residues; that stretch reads SFTSNHTTQTP. Asparagine 246 carries N-linked (GlcNAc...) asparagine glycosylation. Low complexity-rich tracts occupy residues 247-261 and 287-300; these read VSIH…SPVS and ATPT…STSA. PKD domains are found at residues 309-400, 408-497, 503-593, 599-687, and 693-784; these read VVSA…VKPE, VAVV…VNKA, VANA…VQPE, QADA…VKEE, and VAKI…VKPD. A glycan (N-linked (GlcNAc...) asparagine) is linked at asparagine 394. Residues 593-623 form a disordered region; it reads ENNKPPQADAGPDKELTLPVDSTTLDGSKST. Residues 929-949 form a helical membrane-spanning segment; sequence VLYVIIASFVIVVALGILSWT. At 950-1048 the chain is on the cytoplasmic side; that stretch reads TICCCKRQKG…KSRSAREEIL (99 aa). Threonine 973 is subject to Phosphothreonine. The residue at position 977 (serine 977) is a Phosphoserine. The interval 980–1007 is disordered; that stretch reads LKPTSRAGSKQKGPTLSSSLMHSESELD. Residues 985–994 are compositionally biased toward polar residues; the sequence is RAGSKQKGPT. Residues serine 1008 and serine 1030 each carry the phosphoserine modification. Residues 1024-1048 are disordered; sequence LYGQNGSVPNGQTPLKSRSAREEIL. Over residues 1027 to 1039 the composition is skewed to polar residues; the sequence is QNGSVPNGQTPLK. Phosphothreonine is present on threonine 1036.

Interacts with RTN4R. In terms of processing, N-glycosylated.

It is found in the cytoplasmic granule membrane. It localises to the golgi apparatus membrane. The protein localises to the golgi apparatus. Its subcellular location is the trans-Golgi network membrane. The protein resides in the cell membrane. Its function is as follows. Possible role in axon guidance through interaction with RTN4R. Functionally, (Microbial infection) Acts as a receptor for adeno-associated virus and is involved in adeno-associated virus infection through endocytosis system. This Mus musculus (Mouse) protein is Dyslexia-associated protein KIAA0319-like protein.